Here is a 290-residue protein sequence, read N- to C-terminus: 33 kDa chaperonin (290 aa).

Disulfide bonds link cysteine 235-cysteine 237 and cysteine 268-cysteine 271.

Belongs to the HSP33 family. Under oxidizing conditions two disulfide bonds are formed involving the reactive cysteines. Under reducing conditions zinc is bound to the reactive cysteines and the protein is inactive.

It is found in the cytoplasm. Functionally, redox regulated molecular chaperone. Protects both thermally unfolding and oxidatively damaged proteins from irreversible aggregation. Plays an important role in the bacterial defense system toward oxidative stress. The chain is 33 kDa chaperonin from Streptococcus pneumoniae (strain P1031).